A 752-amino-acid chain; its full sequence is Translation initiation factor IF-2 (752 aa).

The interval 26-167 (RQGMGVKSHM…QPTQRKDKPL (142 aa)) is disordered. A compositionally biased stretch (polar residues) spans 34-47 (HMSSVTPDQAQQLR). Low complexity predominate over residues 72–81 (KQNNHQAQNH). Over residues 83 to 96 (QHHDHDKTQNERPQ) the composition is skewed to basic and acidic residues. Positions 101–129 (SRSNNGTKDNNQHQNNGGRFGGSLNNDQG) are enriched in polar residues. A compositionally biased stretch (basic residues) spans 131 to 150 (NGKRFNKKNKKNKKHNKNKR). Positions 151-167 (LREVAHKQPTQRKDKPL) are enriched in basic and acidic residues. Residues 253-422 (TRPAVVTVMG…LLQAEMLELK (170 aa)) form the tr-type G domain. A G1 region spans residues 262–269 (GHVDHGKT). 262-269 (GHVDHGKT) lines the GTP pocket. Residues 287–291 (GITQE) form a G2 region. The segment at 308 to 311 (DTPG) is G3. Residues 308–312 (DTPGH) and 362–365 (NKID) contribute to the GTP site. The G4 stretch occupies residues 362 to 365 (NKID). A G5 region spans residues 398–400 (SAK).

This sequence belongs to the TRAFAC class translation factor GTPase superfamily. Classic translation factor GTPase family. IF-2 subfamily.

It localises to the cytoplasm. One of the essential components for the initiation of protein synthesis. Protects formylmethionyl-tRNA from spontaneous hydrolysis and promotes its binding to the 30S ribosomal subunits. Also involved in the hydrolysis of GTP during the formation of the 70S ribosomal complex. In Limosilactobacillus reuteri (strain DSM 20016) (Lactobacillus reuteri), this protein is Translation initiation factor IF-2.